A 634-amino-acid polypeptide reads, in one-letter code: Ras and EF-hand domain-containing protein homolog (634 aa).

EF-hand domains lie at 5 to 33 (DVENLFSLCDSESKGFLTMEDLKKVCPQL) and 33 to 68 (LDDNDLRFIFNELDRDGSGKIEKMEFLQGFQETVQH). D46, D48, S50, K52, and E57 together coordinate Ca(2+). A coiled-coil region spans residues 169 to 310 (LSEKKHENER…RADFDQKQDE (142 aa)). Disordered regions lie at residues 216–237 (ERERLTKEKEEMRERMSEEMSE) and 308–328 (QDELSARRDQASHATEESESV). GTP-binding positions include 449–454 (AVGKSS), 552–555 (NKVD), and 585–586 (AL). A propeptide spans 632 to 634 (RGS) (removed in mature form).

This sequence belongs to the small GTPase superfamily. Rab family. Homodimer.

It localises to the cytoplasm. It is found in the perinuclear region. Functionally, binds GTP and GDP. Plays a role in uterine seam cell development. The polypeptide is Ras and EF-hand domain-containing protein homolog (Caenorhabditis briggsae).